A 561-amino-acid chain; its full sequence is Putative periplasmic trehalase (561 aa).

Residues 1–30 (MKSPAPSRPQKMALIPACIFLCFAALSVQA) form the signal peptide. Substrate-binding positions include Arg-148, 155–156 (WD), Asn-192, 201–203 (RSQ), 273–275 (RPE), and Gly-306. Catalysis depends on proton donor/acceptor residues Asp-308 and Glu-492. Glu-507 is a binding site for substrate. Residues 535 to 561 (CDNVPATRPLSESTTQPVKQKEAEPTP) form a disordered region.

Belongs to the glycosyl hydrolase 37 family. In terms of assembly, monomer.

Its subcellular location is the periplasm. It catalyses the reaction alpha,alpha-trehalose + H2O = alpha-D-glucose + beta-D-glucose. Functionally, provides the cells with the ability to utilize trehalose at high osmolarity by splitting it into glucose molecules that can subsequently be taken up by the phosphotransferase-mediated uptake system. This chain is Putative periplasmic trehalase, found in Escherichia coli O157:H7.